A 431-amino-acid chain; its full sequence is Glutamate-1-semialdehyde 2,1-aminomutase (431 aa).

N6-(pyridoxal phosphate)lysine is present on Lys-269.

Belongs to the class-III pyridoxal-phosphate-dependent aminotransferase family. HemL subfamily. As to quaternary structure, homodimer. The cofactor is pyridoxal 5'-phosphate.

The protein resides in the cytoplasm. It catalyses the reaction (S)-4-amino-5-oxopentanoate = 5-aminolevulinate. It functions in the pathway porphyrin-containing compound metabolism; protoporphyrin-IX biosynthesis; 5-aminolevulinate from L-glutamyl-tRNA(Glu): step 2/2. The protein operates within porphyrin-containing compound metabolism; chlorophyll biosynthesis. The chain is Glutamate-1-semialdehyde 2,1-aminomutase from Prosthecochloris aestuarii (strain DSM 271 / SK 413).